A 156-amino-acid polypeptide reads, in one-letter code: Small ribosomal subunit protein uS7 (156 aa).

This sequence belongs to the universal ribosomal protein uS7 family. In terms of assembly, part of the 30S ribosomal subunit. Contacts proteins S9 and S11.

In terms of biological role, one of the primary rRNA binding proteins, it binds directly to 16S rRNA where it nucleates assembly of the head domain of the 30S subunit. Is located at the subunit interface close to the decoding center, probably blocks exit of the E-site tRNA. The polypeptide is Small ribosomal subunit protein uS7 (Streptococcus mutans serotype c (strain ATCC 700610 / UA159)).